The chain runs to 221 residues: Lipoprotein-releasing system ATP-binding protein LolD (221 aa).

The ABC transporter domain occupies 6–220 (LILKKISKHY…YNLKNGLLNI (215 aa)). 42 to 49 (GSSGSGKS) is a binding site for ATP.

It belongs to the ABC transporter superfamily. Lipoprotein translocase (TC 3.A.1.125) family. In terms of assembly, the complex is composed of two ATP-binding proteins (LolD) and two transmembrane proteins (LolC and LolE).

Its subcellular location is the cell inner membrane. Part of the ABC transporter complex LolCDE involved in the translocation of mature outer membrane-directed lipoproteins, from the inner membrane to the periplasmic chaperone, LolA. Responsible for the formation of the LolA-lipoprotein complex in an ATP-dependent manner. This Rickettsia typhi (strain ATCC VR-144 / Wilmington) protein is Lipoprotein-releasing system ATP-binding protein LolD.